Here is a 425-residue protein sequence, read N- to C-terminus: Serine hydroxymethyltransferase (425 aa).

(6S)-5,6,7,8-tetrahydrofolate contacts are provided by residues L125 and 129-131 (GHL). At K234 the chain carries N6-(pyridoxal phosphate)lysine.

It belongs to the SHMT family. Homodimer. Requires pyridoxal 5'-phosphate as cofactor.

The protein localises to the cytoplasm. It carries out the reaction (6R)-5,10-methylene-5,6,7,8-tetrahydrofolate + glycine + H2O = (6S)-5,6,7,8-tetrahydrofolate + L-serine. The protein operates within one-carbon metabolism; tetrahydrofolate interconversion. It participates in amino-acid biosynthesis; glycine biosynthesis; glycine from L-serine: step 1/1. Catalyzes the reversible interconversion of serine and glycine with tetrahydrofolate (THF) serving as the one-carbon carrier. This reaction serves as the major source of one-carbon groups required for the biosynthesis of purines, thymidylate, methionine, and other important biomolecules. Also exhibits THF-independent aldolase activity toward beta-hydroxyamino acids, producing glycine and aldehydes, via a retro-aldol mechanism. This chain is Serine hydroxymethyltransferase, found in Marinomonas sp. (strain MWYL1).